The following is a 309-amino-acid chain: Protein FdhE (309 aa).

Belongs to the FdhE family.

Its subcellular location is the cytoplasm. Its function is as follows. Necessary for formate dehydrogenase activity. The sequence is that of Protein FdhE from Salmonella arizonae (strain ATCC BAA-731 / CDC346-86 / RSK2980).